The sequence spans 469 residues: Ribosomal protein uS12 methylthiotransferase RimO (469 aa).

The 115-residue stretch at 1-115 folds into the MTTase N-terminal domain; that stretch reads MKFHIITLGC…IGSVVAGGVA (115 aa). Positions 10, 46, 78, 180, 184, and 187 each coordinate [4Fe-4S] cluster. Positions 166–398 constitute a Radical SAM core domain; it reads NKRGPSAYLK…MAVQQVISRA (233 aa). The region spanning 401–469 is the TRAM domain; sequence ARFVGQTMKV…TDYDLWGEIV (69 aa).

Belongs to the methylthiotransferase family. RimO subfamily. [4Fe-4S] cluster is required as a cofactor.

It localises to the cytoplasm. It carries out the reaction L-aspartate(89)-[ribosomal protein uS12]-hydrogen + (sulfur carrier)-SH + AH2 + 2 S-adenosyl-L-methionine = 3-methylsulfanyl-L-aspartate(89)-[ribosomal protein uS12]-hydrogen + (sulfur carrier)-H + 5'-deoxyadenosine + L-methionine + A + S-adenosyl-L-homocysteine + 2 H(+). Catalyzes the methylthiolation of an aspartic acid residue of ribosomal protein uS12. The chain is Ribosomal protein uS12 methylthiotransferase RimO from Herpetosiphon aurantiacus (strain ATCC 23779 / DSM 785 / 114-95).